Here is a 780-residue protein sequence, read N- to C-terminus: Alpha-xylosidase (780 aa).

Residues asparagine 48, asparagine 84, asparagine 247, and asparagine 298 are each glycosylated (N-linked (GlcNAc...) asparagine). Active-site residues include aspartate 434 and glutamate 437. Asparagine 443 is a glycosylation site (N-linked (GlcNAc...) asparagine). Aspartate 501 functions as the Proton donor in the catalytic mechanism. N-linked (GlcNAc...) asparagine glycosylation is present at asparagine 718.

This sequence belongs to the glycosyl hydrolase 31 family.

It localises to the secreted. The catalysed reaction is Hydrolysis of terminal, non-reducing alpha-D-xylose residues with release of alpha-D-xylose.. Catalyzes the liberation of alpha-xylose from the non-reducing terminal glucose of xyloglucan oligosaccharides. The sequence is that of Alpha-xylosidase from Emericella nidulans (strain FGSC A4 / ATCC 38163 / CBS 112.46 / NRRL 194 / M139) (Aspergillus nidulans).